The sequence spans 486 residues: Cardiolipin synthase A (486 aa).

The next 2 helical transmembrane spans lie at 3–23 and 38–58; these read TFYTVVSWLVILGYWVLIAGV and MAWLLIIYILPLVGIIAYLSV. PLD phosphodiesterase domains lie at 219-246 and 399-426; these read MDLRQHRKMVMIDNYIAYTGSMNMVDPR and EGGLLHTKSVLVDGELSLVGTVNLDMRS. Catalysis depends on residues His224, Lys226, Asp231, His404, Lys406, and Asp411.

Belongs to the phospholipase D family. Cardiolipin synthase subfamily. ClsA sub-subfamily.

The protein resides in the cell inner membrane. The enzyme catalyses 2 a 1,2-diacyl-sn-glycero-3-phospho-(1'-sn-glycerol) = a cardiolipin + glycerol. In terms of biological role, catalyzes the reversible phosphatidyl group transfer from one phosphatidylglycerol molecule to another to form cardiolipin (CL) (diphosphatidylglycerol) and glycerol. This chain is Cardiolipin synthase A, found in Salmonella choleraesuis (strain SC-B67).